The chain runs to 78 residues: Putative membrane protein insertion efficiency factor (78 aa).

The protein belongs to the UPF0161 family.

Its subcellular location is the cell inner membrane. Functionally, could be involved in insertion of integral membrane proteins into the membrane. The sequence is that of Putative membrane protein insertion efficiency factor from Roseobacter denitrificans (strain ATCC 33942 / OCh 114) (Erythrobacter sp. (strain OCh 114)).